Here is a 189-residue protein sequence, read N- to C-terminus: Dynactin subunit 6 (189 aa).

This sequence belongs to the dynactin subunits 5/6 family. Dynactin subunit 6 subfamily. As to quaternary structure, subunit of dynactin, a multiprotein complex part of a tripartite complex with dynein and a adapter, such as BICDL1, BICD2 or HOOK3. The dynactin complex is built around ACTR1A/ACTB filament and consists of an actin-related filament composed of a shoulder domain, a pointed end and a barbed end.

It localises to the cytoplasm. It is found in the cytoskeleton. Functionally, part of the dynactin complex that activates the molecular motor dynein for ultra-processive transport along microtubules. The polypeptide is Dynactin subunit 6 (dynF) (Dictyostelium discoideum (Social amoeba)).